Reading from the N-terminus, the 244-residue chain is Small ribosomal subunit protein uS2 (244 aa).

A disordered region spans residues 224 to 244; that stretch reads GQQGSDEAEEAEEAAEEVVAE. The segment covering 229-244 has biased composition (acidic residues); sequence DEAEEAEEAAEEVVAE.

The protein belongs to the universal ribosomal protein uS2 family.

The sequence is that of Small ribosomal subunit protein uS2 from Desulfitobacterium hafniense (strain DSM 10664 / DCB-2).